Here is a 1396-residue protein sequence, read N- to C-terminus: Helicase ARIP4 (1396 aa).

The segment at 1–103 (MSDASISGSE…LQKPANLRRN (103 aa)) is disordered. The span at 11-49 (PELDPEDMEEEEEDDEDDDEEEEEEEDEEDNDGDDEDDK) shows a compositional bias: acidic residues. Polar residues predominate over residues 75–84 (RSTTSGQSGQ). The Helicase ATP-binding domain occupies 290–510 (RFSGSSGFGC…WCMVDFVRPD (221 aa)). An ATP-binding site is contributed by 303-310 (HSMGLGKT). The short motif at 461 to 464 (DEGH) is the DEAH box element. The short motif at 549–553 (LHSLL) is the LXXLL motif 1 element. The region spanning 717 to 891 (KMVLLFHLIE…RVVDDLNPEV (175 aa)) is the Helicase C-terminal domain. Disordered regions lie at residues 1117 to 1168 (SGKQ…PDSP) and 1194 to 1250 (NLGL…STMN). 2 stretches are compositionally biased toward polar residues: residues 1128 to 1148 (QATSGAQGSSAPYLSNGRHST) and 1218 to 1238 (DQSSHWPSNKRNPYSQLSYPN). Positions 1273-1277 (LPSLL) match the LXXLL motif 2 motif. Positions 1340-1396 (GLPTNNPASTFPGYLSSHSNYQASPGTSSRPLPSGETELGSCEEDGRDDDVVEVTGE) are disordered. Positions 1355–1370 (SSHSNYQASPGTSSRP) are enriched in polar residues. Residues 1380–1396 (SCEEDGRDDDVVEVTGE) show a composition bias toward acidic residues.

It belongs to the SNF2/RAD54 helicase family.

It localises to the nucleus. It catalyses the reaction ATP + H2O = ADP + phosphate + H(+). In terms of biological role, DNA helicase that modulates androgen receptor (AR)-dependent transactivation in a promoter-dependent manner. This Xenopus tropicalis (Western clawed frog) protein is Helicase ARIP4 (rad54l2).